We begin with the raw amino-acid sequence, 959 residues long: DNA polymerase 1 (959 aa).

The segment at 1 to 110 (MRVRGGQEAA…LTLEPSPQSE (110 aa)) is disordered. Residues 44-60 (KKPEPPPTLHREREPES) are compositionally biased toward basic and acidic residues.

Belongs to the DNA polymerase type-B family.

The catalysed reaction is DNA(n) + a 2'-deoxyribonucleoside 5'-triphosphate = DNA(n+1) + diphosphate. The polypeptide is DNA polymerase 1 (polA) (Aeropyrum pernix (strain ATCC 700893 / DSM 11879 / JCM 9820 / NBRC 100138 / K1)).